A 594-amino-acid polypeptide reads, in one-letter code: Arrestin domain-containing protein C584.15c (594 aa).

A compositionally biased stretch (polar residues) spans 368–398; it reads NPQLQSGFTTPNLSRRNSSDFGPNSPVNIHS. Disordered stretches follow at residues 368–417 and 531–594; these read NPQL…NSNA and EATR…RGVR. Residues 404 to 417 are compositionally biased toward low complexity; that stretch reads SGQQPSSPASNSNA. Polar residues predominate over residues 534 to 552; the sequence is RPSSPTESVEIPSNTTTIA. Over residues 565–574 the composition is skewed to pro residues; it reads PSTPAPPLPS. Phosphoserine is present on Ser-584.

This sequence belongs to the arrestin family.

The protein is Arrestin domain-containing protein C584.15c of Schizosaccharomyces pombe (strain 972 / ATCC 24843) (Fission yeast).